Here is a 705-residue protein sequence, read N- to C-terminus: MLNPITKKFQLGKHTVTLETGAIARQASAAVMASMDDTCVLVSVVGKKEAKPGQDFFPLTVNYQERAYAAGKIPGSFFKREGRPSEEETLIARLIDRPIRPLFPEGFTNEVQVIITVVSVNPEIAPDIISLIGTSAALAISGLPFSGPVGAARVGYTDGQYILNPLQSELPTSQLDLVVSGTDSAVLMVESEADVLSEEVMLGAVVYGHEQMQVAVSAIKEFKAEVNTPSWDWVAPVKNAELLAKIAELSEAQVNEAYQITEKAVRYEKIKEIRSSVLEALLAENADVDVQEAKDLFHDLEKTVVRGRITDGNPRIDGRDPESIRALDVMTGVLPRTHGSAVFTRGETQALVTATLGTQRDAQRLDTLMGDKTDPFMLHYNFPPYCVGETGFVGSPKRREIGHGRLAKRGMLAVMPSLEEFPYAVRVVSEITESNGSSSMASVCGTSLALMDAGVPIKASVAGIAMGLVKEGEKFVVLSDILGDEDHLGDMDFKVAGTTGGITALQMDIKIEGITQEIMQIALNQAKAARTHILSVMDEAIGGHRDDISEFAPRIHTMKVSQDKIRDIIGKGGATIRQLTEETGTTIEIEDDGTVKIAATSGEQAEDAINRIKALTAEIEVGTLYTGKVVRIVDFGAFVNVLPGKDGLVHISQISEERVNNVSEVLTEGQEVKVKVLEVDRQGRVRLSIKEAMEKPAAEATPAAE.

Mg(2+) is bound by residues aspartate 486 and aspartate 492. The 60-residue stretch at 553 to 612 folds into the KH domain; sequence PRIHTMKVSQDKIRDIIGKGGATIRQLTEETGTTIEIEDDGTVKIAATSGEQAEDAINRI. The S1 motif domain maps to 622–690; sequence GTLYTGKVVR…RQGRVRLSIK (69 aa).

It belongs to the polyribonucleotide nucleotidyltransferase family. Component of the RNA degradosome, which is a multiprotein complex involved in RNA processing and mRNA degradation. Requires Mg(2+) as cofactor.

It localises to the cytoplasm. It catalyses the reaction RNA(n+1) + phosphate = RNA(n) + a ribonucleoside 5'-diphosphate. Its function is as follows. Involved in mRNA degradation. Catalyzes the phosphorolysis of single-stranded polyribonucleotides processively in the 3'- to 5'-direction. The sequence is that of Polyribonucleotide nucleotidyltransferase from Colwellia psychrerythraea (strain 34H / ATCC BAA-681) (Vibrio psychroerythus).